The following is a 429-amino-acid chain: Endoglucanase A (429 aa).

The N-terminal stretch at 1–34 (MVSKKQKFLTVILVIVLAIVIVGGVFGISFVKGR) is a signal peptide. Basic and acidic residues predominate over residues 46–94 (AKTEQVKEPAKEEPKLVIKEKKQDESAKKEQELKKAKEEAEAAVEKETE). The disordered stretch occupies residues 46-100 (AKTEQVKEPAKEEPKLVIKEKKQDESAKKEQELKKAKEEAEAAVEKETEKTEEEP). Glutamate 249 (proton donor) is an active-site residue. Glutamate 334 functions as the Nucleophile in the catalytic mechanism.

This sequence belongs to the glycosyl hydrolase 5 (cellulase A) family.

It carries out the reaction Endohydrolysis of (1-&gt;4)-beta-D-glucosidic linkages in cellulose, lichenin and cereal beta-D-glucans.. This chain is Endoglucanase A (celA), found in Butyrivibrio fibrisolvens.